Reading from the N-terminus, the 666-residue chain is Semaphorin-7A (666 aa).

Residues 1 to 21 (MTPPPPGRAAPSAPRARVPGP) form a disordered region. A signal peptide spans 1–44 (MTPPPPGRAAPSAPRARVPGPPARLGLPLRLRLLLLLWAAAASA). Low complexity predominate over residues 9-21 (AAPSAPRARVPGP). A Sema domain is found at 53–490 (RIFAVWKGHV…SQWEVSQVPL (438 aa)). A glycan (N-linked (GlcNAc...) asparagine) is linked at asparagine 105. Cysteine 120 and cysteine 126 are disulfide-bonded. Arginine 135 bears the Asymmetric dimethylarginine mark. Residues cysteine 143 and cysteine 152 are joined by a disulfide bond. N-linked (GlcNAc...) asparagine glycosylation is found at asparagine 157 and asparagine 258. Cystine bridges form between cysteine 266–cysteine 366, cysteine 291–cysteine 335, cysteine 493–cysteine 511, cysteine 500–cysteine 541, cysteine 503–cysteine 518, cysteine 566–cysteine 613, and cysteine 587–cysteine 596. Positions 267–269 (RGD) are interaction with integrins. The Cell attachment site motif lies at 267-269 (RGD). A glycan (N-linked (GlcNAc...) asparagine) is linked at asparagine 330. Residues 544 to 629 (PKPDKAPLQK…YFREAQHWQL (86 aa)) enclose the Ig-like C2-type domain. Asparagine 602 carries N-linked (GlcNAc...) asparagine glycosylation. Alanine 648 carries GPI-anchor amidated alanine lipidation. Positions 649 to 666 (ASLWLGVLPTLTLGLLVH) are cleaved as a propeptide — removed in mature form.

Belongs to the semaphorin family. Interacts with ITGA1 and ITGB1. Interacts with PLXNC1. In terms of tissue distribution, detected in skin keratinocytes and on endothelial cells from skin blood vessels (at protein level). Expressed in fibroblasts, keratinocytes, melanocytes, placenta, testis, ovary, spleen, brain, spinal cord, lung, heart, adrenal gland, lymph nodes, thymus, intestine and kidney.

It localises to the cell membrane. Plays an important role in integrin-mediated signaling and functions both in regulating cell migration and immune responses. Promotes formation of focal adhesion complexes, activation of the protein kinase PTK2/FAK1 and subsequent phosphorylation of MAPK1 and MAPK3. Promotes production of pro-inflammatory cytokines by monocytes and macrophages. Plays an important role in modulating inflammation and T-cell-mediated immune responses. Promotes axon growth in the embryonic olfactory bulb. Promotes attachment, spreading and dendrite outgrowth in melanocytes. The protein is Semaphorin-7A (SEMA7A) of Homo sapiens (Human).